A 201-amino-acid polypeptide reads, in one-letter code: Ribonuclease HII (201 aa).

The RNase H type-2 domain occupies 12-201 (DLVAGVDEVG…VRELLDVSVQ (190 aa)). Residues Asp18, Glu19, and Asp110 each contribute to the a divalent metal cation site.

The protein belongs to the RNase HII family. Mn(2+) serves as cofactor. The cofactor is Mg(2+).

It is found in the cytoplasm. The catalysed reaction is Endonucleolytic cleavage to 5'-phosphomonoester.. Functionally, endonuclease that specifically degrades the RNA of RNA-DNA hybrids. This chain is Ribonuclease HII, found in Pseudomonas aeruginosa (strain LESB58).